Consider the following 555-residue polypeptide: Steroid-22-oyl-CoA synthetase (555 aa).

Belongs to the ATP-dependent AMP-binding enzyme family.

The enzyme catalyses 3-oxochol-4-en-22-oate + ATP + CoA = 3-oxochol-4-en-22-oyl-CoA + AMP + diphosphate. The catalysed reaction is 3-hydroxy-9-oxo-9,10-seco-chola-1,3,5-trien-22-oate + ATP + CoA = 3-hydroxy-9-oxo-9,10-seco-chola-1,3,5-trien-22-oyl-CoA + AMP + diphosphate. It functions in the pathway steroid metabolism. Its function is as follows. Involved in cholate catabolism. Catalyzes the ATP-dependent formation of CoA thioesters of steroids with isopropanoyl side chains, likely occurring as degradation intermediates. Can use 4-BNC, HSBNC and HIDP as substrate. This chain is Steroid-22-oyl-CoA synthetase, found in Rhodococcus jostii (strain RHA1).